Here is a 310-residue protein sequence, read N- to C-terminus: Porphobilinogen deaminase (310 aa).

Cys-242 is subject to S-(dipyrrolylmethanemethyl)cysteine.

The protein belongs to the HMBS family. In terms of assembly, monomer. It depends on dipyrromethane as a cofactor.

It carries out the reaction 4 porphobilinogen + H2O = hydroxymethylbilane + 4 NH4(+). Its pathway is porphyrin-containing compound metabolism; protoporphyrin-IX biosynthesis; coproporphyrinogen-III from 5-aminolevulinate: step 2/4. Functionally, tetrapolymerization of the monopyrrole PBG into the hydroxymethylbilane pre-uroporphyrinogen in several discrete steps. This chain is Porphobilinogen deaminase, found in Shewanella sp. (strain W3-18-1).